A 122-amino-acid polypeptide reads, in one-letter code: Large ribosomal subunit protein uL14 (122 aa).

This sequence belongs to the universal ribosomal protein uL14 family. As to quaternary structure, part of the 50S ribosomal subunit. Forms a cluster with proteins L3 and L19. In the 70S ribosome, L14 and L19 interact and together make contacts with the 16S rRNA in bridges B5 and B8.

Functionally, binds to 23S rRNA. Forms part of two intersubunit bridges in the 70S ribosome. This Hyphomonas neptunium (strain ATCC 15444) protein is Large ribosomal subunit protein uL14.